Here is a 261-residue protein sequence, read N- to C-terminus: Acyl-[acyl-carrier-protein]--UDP-N-acetylglucosamine O-acyltransferase (261 aa).

This sequence belongs to the transferase hexapeptide repeat family. LpxA subfamily. As to quaternary structure, homotrimer.

The protein localises to the cytoplasm. The enzyme catalyses a (3R)-hydroxyacyl-[ACP] + UDP-N-acetyl-alpha-D-glucosamine = a UDP-3-O-[(3R)-3-hydroxyacyl]-N-acetyl-alpha-D-glucosamine + holo-[ACP]. It participates in glycolipid biosynthesis; lipid IV(A) biosynthesis; lipid IV(A) from (3R)-3-hydroxytetradecanoyl-[acyl-carrier-protein] and UDP-N-acetyl-alpha-D-glucosamine: step 1/6. Involved in the biosynthesis of lipid A, a phosphorylated glycolipid that anchors the lipopolysaccharide to the outer membrane of the cell. In Paracoccus denitrificans (strain Pd 1222), this protein is Acyl-[acyl-carrier-protein]--UDP-N-acetylglucosamine O-acyltransferase.